The primary structure comprises 500 residues: Protein SLENDER RICE1-LIKE 2 (500 aa).

A GRAS domain is found at 68–454 (KELEKMALRS…QRLYSASAWR (387 aa)). A leucine repeat I (LRI) region spans residues 75–135 (LRSVNLMVTC…DALAERLFPA (61 aa)). Residues 154-219 (FRGFYEAGPY…GGPPFLRITG (66 aa)) are VHIID. The VHIID signature appears at 185 to 189 (VHVID). The interval 233–265 (DVGLRLAEFARSCSVPFAFRGIAADQLDGLRPW) is leucine repeat II (LRII). Residues 275–376 (VAINSVLQLH…EAYLQGEIAD (102 aa)) form a PFYRE region. The LXXLL motif signature appears at 283–287 (LHRLL). An SAW region spans residues 379-454 (SREGSSRVER…QRLYSASAWR (76 aa)). The disordered stretch occupies residues 466-500 (SGAADAMEESQNSNTNGGGGGSSGGGHGALNQIMQ). Gly residues predominate over residues 481–493 (NGGGGGSSGGGHG).

It belongs to the GRAS family. Expressed at low levels in leaf blades, leaf sheaths, rachis and flowers. Expressed in the embryo of immature seeds.

Its subcellular location is the nucleus. Its function is as follows. Probable transcriptional regulator that acts as a repressor of the gibberellin (GA) signaling pathway. Its repressive activity is weaker than that of SLR1. Its overexpression prevents the GA signaling pathway and induces a dwarf phenotype in Arabidopsis thaliana plants. The protein is Protein SLENDER RICE1-LIKE 2 of Oryza sativa subsp. japonica (Rice).